The chain runs to 89 residues: Large ribosomal subunit protein bL27 (89 aa).

Belongs to the bacterial ribosomal protein bL27 family.

This chain is Large ribosomal subunit protein bL27, found in Ruegeria sp. (strain TM1040) (Silicibacter sp.).